The chain runs to 157 residues: Ubiquitin-like protein 4A (157 aa).

The region spanning 1 to 76 (MQLTVKALQG…LNLVVKPLEK (76 aa)) is the Ubiquitin-like domain. Lys-48 participates in a covalent cross-link: Glycyl lysine isopeptide (Lys-Gly) (interchain with G-Cter in ubiquitin). Ser-90 is subject to Phosphoserine. Residues 96-138 (WQLISKVLARHFSVADASRVLEQLQRDYDRSLSRLTLDDIERL) are required and sufficient for interaction with BAG6.

Component of the BAG6/BAT3 complex, at least composed of BAG6, UBL4A and GET4/TRC35. Interacts with BAG6; the interaction is direct and required for UBL4A protein stability. Interacts with USP13; may be indirect via BAG6. Polyubiquitinated. Ubiquitination by AMFR and deubiquitination by USP13 may regulate the interaction between the BAG6/BAT3 complex and SGTA and therefore may regulate client proteins fate.

The protein resides in the cytoplasm. It localises to the cytosol. Its subcellular location is the nucleus. Its function is as follows. As part of a cytosolic protein quality control complex, the BAG6/BAT3 complex, maintains misfolded and hydrophobic patches-containing proteins in a soluble state and participates in their proper delivery to the endoplasmic reticulum or alternatively can promote their sorting to the proteasome where they undergo degradation. The BAG6/BAT3 complex is involved in the post-translational delivery of tail-anchored/type II transmembrane proteins to the endoplasmic reticulum membrane. Recruited to ribosomes, it interacts with the transmembrane region of newly synthesized tail-anchored proteins and together with SGTA and ASNA1 mediates their delivery to the endoplasmic reticulum. Client proteins that cannot be properly delivered to the endoplasmic reticulum are ubiquitinated and sorted to the proteasome. Similarly, the BAG6/BAT3 complex also functions as a sorting platform for proteins of the secretory pathway that are mislocalized to the cytosol either delivering them to the proteasome for degradation or to the endoplasmic reticulum. The BAG6/BAT3 complex also plays a role in the endoplasmic reticulum-associated degradation (ERAD), a quality control mechanism that eliminates unwanted proteins of the endoplasmic reticulum through their retrotranslocation to the cytosol and their targeting to the proteasome. It maintains these retrotranslocated proteins in an unfolded yet soluble state condition in the cytosol to ensure their proper delivery to the proteasome. The protein is Ubiquitin-like protein 4A of Mus musculus (Mouse).